The following is a 490-amino-acid chain: uncharacterized protein (490 aa).

Residues 370 to 385 (FSMKRPSSSSSSLSGS) are compositionally biased toward low complexity. Residues 370–406 (FSMKRPSSSSSSLSGSWHGDTENSVKQSLASPSEASL) form a disordered region. A compositionally biased stretch (polar residues) spans 391-406 (ENSVKQSLASPSEASL).

The protein localises to the cytoplasm. It is found in the nucleus. This is an uncharacterized protein from Schizosaccharomyces pombe (strain 972 / ATCC 24843) (Fission yeast).